The sequence spans 382 residues: Gap junction alpha-1 protein (382 aa).

Residues 2–23 (GDWSALGKLLDKVQAYSTAGGK) lie on the Cytoplasmic side of the membrane. Serine 5 bears the Phosphoserine mark. The chain crosses the membrane as a helical span at residues 24–44 (VWLSVLFIFRILLLGTAVESA). Residues 45 to 76 (WGDEQSAFRCNTQQPGCENVCYDKSFPISHVR) lie on the Extracellular side of the membrane. Intrachain disulfides connect cysteine 54/cysteine 192 and cysteine 187/cysteine 198. Residues 77 to 97 (FWVLQIIFVSVPTLLYLAHVF) form a helical membrane-spanning segment. The Cytoplasmic segment spans residues 98–155 (YVMRKEEKLNKKEEELKVAQTDGVNVEMHLKQIEIKKFKYGIEEHGKVKMRGGLLRTY). Lysine 144 participates in a covalent cross-link: Glycyl lysine isopeptide (Lys-Gly) (interchain with G-Cter in SUMO). Residues 156-176 (IISILFKSVFEVAFLLIQWYI) traverse the membrane as a helical segment. Residues 177–207 (YGFSLSAVYTCKRDPCPHQVDCFLSRPTEKT) lie on the Extracellular side of the membrane. The helical transmembrane segment at 208-228 (IFIIFMLVVSLVSLALNIIEL) threads the bilayer. Topologically, residues 229–382 (FYAFFKGVKD…SRPRPDDLEI (154 aa)) are cytoplasmic. Lysine 237 participates in a covalent cross-link: Glycyl lysine isopeptide (Lys-Gly) (interchain with G-Cter in SUMO). Residues 244 to 382 (SDPYHATTGP…SRPRPDDLEI (139 aa)) form an interaction with NOV region. Tyrosine 247 is modified (phosphotyrosine). A phosphoserine mark is found at serine 255, serine 257, and serine 262. The tract at residues 264-382 (KYAYFNGCSS…SRPRPDDLEI (119 aa)) is interaction with UBQLN4. Residue cysteine 271 is modified to S-nitrosocysteine. At threonine 275 the chain carries Phosphothreonine. Phosphoserine is present on residues serine 306 and serine 314. Positions 317–332 (QNRMGQAGSTISNSHA) are enriched in polar residues. The tract at residues 317 to 382 (QNRMGQAGST…SRPRPDDLEI (66 aa)) is disordered. Position 325 is a phosphoserine; by CK1 (serine 325). Threonine 326 bears the Phosphothreonine mark. Phosphoserine; by CK1 is present on residues serine 328 and serine 330. Over residues 342-351 (QNSKKLDAGH) the composition is skewed to basic and acidic residues. Serine 344 and serine 365 each carry phosphoserine. Residues 362–374 (RPSSRASSRASSR) show a composition bias toward low complexity. Serine 368 is modified (phosphoserine; by PKC/PRKCG and PKC/PRKCD). Phosphoserine occurs at positions 369 and 373.

This sequence belongs to the connexin family. Alpha-type (group II) subfamily. As to quaternary structure, a connexon is composed of a hexamer of connexins. Interacts with SGSM3. Interacts with RIC1/CIP150. Interacts with CNST and CSNK1D. Interacts (via C-terminus) with TJP1. Interacts (via C-terminus) with SRC (via SH3 domain). Interacts (not ubiquitinated) with UBQLN4 (via UBA domain). Interacts with NOV. Interacts with TMEM65. Interacts with ANK3/ANKG and PKP2. In terms of processing, phosphorylation at Ser-325, Ser-328 and Ser-330 by CK1 modulates gap junction assembly. Phosphorylated at Ser-368 by PRKCG; phosphorylation induces disassembly of gap junction plaques and inhibition of gap junction activity. Phosphorylation at Ser-368 by PRKCD triggers its internalization into small vesicles leading to proteasome-mediated degradation. Sumoylated with SUMO1, SUMO2 and SUMO3, which may regulate the level of functional Cx43 gap junctions at the plasma membrane. May be desumoylated by SENP1 or SENP2. Post-translationally, S-nitrosylation at Cys-271 is enriched at the muscle endothelial gap junction in arteries, it augments channel permeability and may regulate of smooth muscle cell to endothelial cell communication. In terms of processing, acetylated in the developing cortex; leading to delocalization from the cell membrane.

Its subcellular location is the cell membrane. The protein localises to the cell junction. It localises to the gap junction. The protein resides in the endoplasmic reticulum. Functionally, gap junction protein that acts as a regulator of bladder capacity. A gap junction consists of a cluster of closely packed pairs of transmembrane channels, the connexons, through which materials of low MW diffuse from one cell to a neighboring cell. May play a critical role in the physiology of hearing by participating in the recycling of potassium to the cochlear endolymph. Negative regulator of bladder functional capacity: acts by enhancing intercellular electrical and chemical transmission, thus sensitizing bladder muscles to cholinergic neural stimuli and causing them to contract. May play a role in cell growth inhibition through the regulation of NOV expression and localization. Plays an essential role in gap junction communication in the ventricles. This is Gap junction alpha-1 protein (GJA1) from Sus scrofa (Pig).